The following is a 267-amino-acid chain: 4-hydroxy-tetrahydrodipicolinate reductase (267 aa).

Residues 8–13 (GAAGRM) and E34 each bind NAD(+). Residue R35 coordinates NADP(+). NAD(+)-binding positions include 98 to 100 (GST) and 122 to 125 (APNM). Catalysis depends on H155, which acts as the Proton donor/acceptor. H156 serves as a coordination point for (S)-2,3,4,5-tetrahydrodipicolinate. The active-site Proton donor is the K159. Position 165 to 166 (165 to 166 (GT)) interacts with (S)-2,3,4,5-tetrahydrodipicolinate.

The protein belongs to the DapB family.

It is found in the cytoplasm. It catalyses the reaction (S)-2,3,4,5-tetrahydrodipicolinate + NAD(+) + H2O = (2S,4S)-4-hydroxy-2,3,4,5-tetrahydrodipicolinate + NADH + H(+). The enzyme catalyses (S)-2,3,4,5-tetrahydrodipicolinate + NADP(+) + H2O = (2S,4S)-4-hydroxy-2,3,4,5-tetrahydrodipicolinate + NADPH + H(+). It functions in the pathway amino-acid biosynthesis; L-lysine biosynthesis via DAP pathway; (S)-tetrahydrodipicolinate from L-aspartate: step 4/4. Functionally, catalyzes the conversion of 4-hydroxy-tetrahydrodipicolinate (HTPA) to tetrahydrodipicolinate. The sequence is that of 4-hydroxy-tetrahydrodipicolinate reductase from Citrifermentans bemidjiense (strain ATCC BAA-1014 / DSM 16622 / JCM 12645 / Bem) (Geobacter bemidjiensis).